Reading from the N-terminus, the 282-residue chain is Acetylglutamate kinase (282 aa).

Substrate is bound by residues 62-63 (GG), Arg-84, and Asn-178.

Belongs to the acetylglutamate kinase family. ArgB subfamily.

It is found in the cytoplasm. The enzyme catalyses N-acetyl-L-glutamate + ATP = N-acetyl-L-glutamyl 5-phosphate + ADP. Its pathway is amino-acid biosynthesis; L-arginine biosynthesis; N(2)-acetyl-L-ornithine from L-glutamate: step 2/4. Its function is as follows. Catalyzes the ATP-dependent phosphorylation of N-acetyl-L-glutamate. This Thermotoga petrophila (strain ATCC BAA-488 / DSM 13995 / JCM 10881 / RKU-1) protein is Acetylglutamate kinase.